The primary structure comprises 500 residues: Inner membrane transporter YjeM (500 aa).

Residues 1 to 10 (MTHTIKKMSL) are Cytoplasmic-facing. The chain crosses the membrane as a helical span at residues 11–31 (IGLILMIFTSVFGFANSPSAF). The Periplasmic segment spans residues 32–37 (YLMGYS). The chain crosses the membrane as a helical span at residues 38–58 (AIPWYIFSALLFFIPFALMMA). At 59–83 (EMGSAYRKEEGGIYSWMNNSVGPRY) the chain is on the cytoplasmic side. A helical membrane pass occupies residues 84–104 (AFIGTFMWFSSYVIWMVSTAA). Over 105–124 (KIWVPFSTFVFGADMTQHWR) the chain is Periplasmic. Residues 125–145 (IAGLEPTQVVGLLAVGWMILV) form a helical membrane-spanning segment. Over 146–163 (TCVAARGINKIARITAVG) the chain is Cytoplasmic. The helical transmembrane segment at 164 to 184 (GIAVMCLNLVLLLVSVAILLL) threads the bilayer. The Periplasmic segment spans residues 185 to 209 (NGGHFAQEINFTSSPNPGYHSGLAM). The chain crosses the membrane as a helical span at residues 210 to 230 (LSFVVFAIFAYGGIEAVGGLV). Topologically, residues 231 to 243 (DKTEKPEKNFAKG) are cytoplasmic. A helical transmembrane segment spans residues 244–264 (IVFAAIVISIGYSLAIFLWGV). The Periplasmic segment spans residues 265 to 308 (STNWQQILSNSAVNLGNITYILMSSLGTTLGNALNLSPEAAMTV). A helical transmembrane segment spans residues 309–329 (GVWFARITGLSMFLAYTGAFF). The Cytoplasmic segment spans residues 330-361 (TLSYSPLKAIIQGTPKALWPAPMTTLNANGMP). Residues 362–382 (ATAMWLQCVLVSLFILLVSFG) traverse the membrane as a helical segment. The Periplasmic segment spans residues 383-394 (GDTASAFYNKLT). A helical membrane pass occupies residues 395-415 (LMANVSMTLPYLFLALAFPFF). Residues 416-433 (KARQDLERPFVLFKTKAS) are Cytoplasmic-facing. Residues 434 to 454 (TLVATGVVVLVVTFANVFTII) traverse the membrane as a helical segment. Topologically, residues 455–462 (QPVIEAGD) are periplasmic. The helical transmembrane segment at 463–483 (WDSALWMIGGPIFFSLLAMAI) threads the bilayer. Residues 484 to 500 (YQNYSSRMSADPEWAAE) lie on the Cytoplasmic side of the membrane.

This sequence belongs to the amino acid-polyamine-organocation (APC) superfamily.

It is found in the cell inner membrane. The protein is Inner membrane transporter YjeM (yjeM) of Salmonella typhi.